Consider the following 659-residue polypeptide: RNA-binding protein MIP6 (659 aa).

Polar residues predominate over residues 1-27 (MPNSHGNVLNNISLNSKQNPRSISKSC). Residues 1 to 35 (MPNSHGNVLNNISLNSKQNPRSISKSCPNDKDARQ) are disordered. RRM domains are found at residues 111–189 (NSLF…PSMK), 199–267 (TNVF…GNKI), and 313–389 (KTIL…PGKD).

Interacts with MEX67.

The protein localises to the cytoplasm. The sequence is that of RNA-binding protein MIP6 (MIP6) from Saccharomyces cerevisiae (strain ATCC 204508 / S288c) (Baker's yeast).